A 436-amino-acid polypeptide reads, in one-letter code: Serine--tRNA ligase (436 aa).

An L-serine-binding site is contributed by 239–241 (TAE). ATP is bound at residue 270–272 (RLE). Residue Glu293 coordinates L-serine. Position 357–360 (357–360 (EISS)) interacts with ATP. Position 393 (Ser393) interacts with L-serine.

The protein belongs to the class-II aminoacyl-tRNA synthetase family. Type-1 seryl-tRNA synthetase subfamily. In terms of assembly, homodimer. The tRNA molecule binds across the dimer.

It localises to the cytoplasm. It catalyses the reaction tRNA(Ser) + L-serine + ATP = L-seryl-tRNA(Ser) + AMP + diphosphate + H(+). The catalysed reaction is tRNA(Sec) + L-serine + ATP = L-seryl-tRNA(Sec) + AMP + diphosphate + H(+). It functions in the pathway aminoacyl-tRNA biosynthesis; selenocysteinyl-tRNA(Sec) biosynthesis; L-seryl-tRNA(Sec) from L-serine and tRNA(Sec): step 1/1. Functionally, catalyzes the attachment of serine to tRNA(Ser). Is also able to aminoacylate tRNA(Sec) with serine, to form the misacylated tRNA L-seryl-tRNA(Sec), which will be further converted into selenocysteinyl-tRNA(Sec). The protein is Serine--tRNA ligase of Blochmanniella floridana.